Consider the following 562-residue polypeptide: MFS-type efflux pump elcC (562 aa).

11 helical membrane passes run 50–70 (WVFL…GAAP), 80–100 (VVAG…VAEF), 111–131 (GMLG…GGAF), 139–159 (LCFY…FLLV), 184–204 (LYGL…TQWG), 215–235 (IIAL…IEIW), 257–277 (IFSF…PLWF), 288–308 (SGIH…AAGG), 309–329 (MVFG…LAAV), 351–371 (VLYG…IQAA), and 383–403 (VVIF…QNVF). A glycan (N-linked (GlcNAc...) asparagine) is linked at N448. Residues 455–475 (FYVAVATAGLSMAGSILIPWL) traverse the membrane as a helical segment. The segment at 515–562 (EIASEDSQSSDIEKVPRNNEVSTYDSQTSEVEKSSVGSTNRKVESIRN) is disordered. Residues 533 to 554 (NEVSTYDSQTSEVEKSSVGSTN) are compositionally biased toward polar residues.

The protein belongs to the major facilitator superfamily. TCR/Tet family.

The protein resides in the cell membrane. Its function is as follows. MFS-type efflux pump; part of the gene cluster that mediates the biosynthesis of elsinochrome C, a perelyenequinone phytotoxin structurally similar to cercosporin. The polypeptide is MFS-type efflux pump elcC (Phaeosphaeria nodorum (strain SN15 / ATCC MYA-4574 / FGSC 10173) (Glume blotch fungus)).